Here is a 419-residue protein sequence, read N- to C-terminus: UDP-N-acetylglucosamine 1-carboxyvinyltransferase (419 aa).

Position 22–23 (22–23 (KN)) interacts with phosphoenolpyruvate. UDP-N-acetyl-alpha-D-glucosamine is bound at residue Arg91. Cys115 acts as the Proton donor in catalysis. Cys115 is modified (2-(S-cysteinyl)pyruvic acid O-phosphothioketal). Residues 120–124 (RPVDL), 160–163 (KVSV), Asp305, and Val327 each bind UDP-N-acetyl-alpha-D-glucosamine.

This sequence belongs to the EPSP synthase family. MurA subfamily.

The protein resides in the cytoplasm. It catalyses the reaction phosphoenolpyruvate + UDP-N-acetyl-alpha-D-glucosamine = UDP-N-acetyl-3-O-(1-carboxyvinyl)-alpha-D-glucosamine + phosphate. It participates in cell wall biogenesis; peptidoglycan biosynthesis. In terms of biological role, cell wall formation. Adds enolpyruvyl to UDP-N-acetylglucosamine. This Salmonella schwarzengrund (strain CVM19633) protein is UDP-N-acetylglucosamine 1-carboxyvinyltransferase.